A 336-amino-acid polypeptide reads, in one-letter code: Fructose-1,6-bisphosphatase class 1 (336 aa).

Residues glutamate 90, aspartate 112, leucine 114, and aspartate 115 each contribute to the Mg(2+) site. Substrate-binding positions include 115–118 (DGSS), asparagine 211, and lysine 277. Glutamate 283 contacts Mg(2+).

Belongs to the FBPase class 1 family. In terms of assembly, homotetramer. It depends on Mg(2+) as a cofactor.

The protein resides in the cytoplasm. The catalysed reaction is beta-D-fructose 1,6-bisphosphate + H2O = beta-D-fructose 6-phosphate + phosphate. The protein operates within carbohydrate biosynthesis; gluconeogenesis. The sequence is that of Fructose-1,6-bisphosphatase class 1 from Stutzerimonas stutzeri (strain A1501) (Pseudomonas stutzeri).